We begin with the raw amino-acid sequence, 173 residues long: 2-C-methyl-D-erythritol 2,4-cyclodiphosphate synthase (173 aa).

Positions 17 and 19 each coordinate a divalent metal cation. Residues 17-19 and 49-50 each bind 4-CDP-2-C-methyl-D-erythritol 2-phosphate; these read DVH and HS. His-57 provides a ligand contact to a divalent metal cation. 4-CDP-2-C-methyl-D-erythritol 2-phosphate-binding positions include 76 to 80, 147 to 150, and Arg-157; these read FPNTD and TTTE.

This sequence belongs to the IspF family. Homotrimer. It depends on a divalent metal cation as a cofactor.

The catalysed reaction is 4-CDP-2-C-methyl-D-erythritol 2-phosphate = 2-C-methyl-D-erythritol 2,4-cyclic diphosphate + CMP. It participates in isoprenoid biosynthesis; isopentenyl diphosphate biosynthesis via DXP pathway; isopentenyl diphosphate from 1-deoxy-D-xylulose 5-phosphate: step 4/6. Its function is as follows. Involved in the biosynthesis of isopentenyl diphosphate (IPP) and dimethylallyl diphosphate (DMAPP), two major building blocks of isoprenoid compounds. Catalyzes the conversion of 4-diphosphocytidyl-2-C-methyl-D-erythritol 2-phosphate (CDP-ME2P) to 2-C-methyl-D-erythritol 2,4-cyclodiphosphate (ME-CPP) with a corresponding release of cytidine 5-monophosphate (CMP). This is 2-C-methyl-D-erythritol 2,4-cyclodiphosphate synthase from Ehrlichia ruminantium (strain Welgevonden).